A 163-amino-acid chain; its full sequence is ADP-ribosylation factor-like protein 2-binding protein (163 aa).

This sequence belongs to the ARL2BP family. In terms of assembly, interacts with GTP bound ARL2 and ARL3; the complex ARL2-ARL2BP as well as ARL2BP alone, binds to SLC25A4/ANT1. Interaction with ARL2 may be required for cilia basal body localization. Interacts with STAT3; interaction is enhanced with ARL2. Found in a complex with ARL2BP, ARL2 and SLC25A6. Found in a complex with ARL2, ARL2BP and SLC25A4. Interacts with STAT2, STAT3 and STAT4. In terms of tissue distribution, ubiquitous with higher expression in brain, especially in hippocampus and cortex. Also expressed in lung, cerebellum, liver, kidney, spleen and heart (at protein level).

Its subcellular location is the cytoplasm. The protein localises to the mitochondrion intermembrane space. It localises to the cytoskeleton. It is found in the microtubule organizing center. The protein resides in the centrosome. Its subcellular location is the nucleus. The protein localises to the spindle. It localises to the cilium basal body. Functionally, together with ARL2, plays a role in the nuclear translocation, retention and transcriptional activity of STAT3. May play a role as an effector of ARL2. In Rattus norvegicus (Rat), this protein is ADP-ribosylation factor-like protein 2-binding protein (Arl2bp).